A 475-amino-acid chain; its full sequence is Ribulose bisphosphate carboxylase large chain (475 aa).

The propeptide occupies 1 to 2 (MS). An N-acetylproline modification is found at Pro3. Residue Lys14 is modified to N6,N6,N6-trimethyllysine. Positions 123 and 173 each coordinate substrate. Residue Lys175 is the Proton acceptor of the active site. Lys177 contacts substrate. Mg(2+) is bound by residues Lys201, Asp203, and Glu204. At Lys201 the chain carries N6-carboxylysine. Catalysis depends on His294, which acts as the Proton acceptor. Substrate is bound by residues Arg295, His327, and Ser379.

Belongs to the RuBisCO large chain family. Type I subfamily. In terms of assembly, heterohexadecamer of 8 large chains and 8 small chains; disulfide-linked. The disulfide link is formed within the large subunit homodimers. Mg(2+) is required as a cofactor. In terms of processing, the disulfide bond which can form in the large chain dimeric partners within the hexadecamer appears to be associated with oxidative stress and protein turnover.

It localises to the plastid. The protein resides in the chloroplast. The enzyme catalyses 2 (2R)-3-phosphoglycerate + 2 H(+) = D-ribulose 1,5-bisphosphate + CO2 + H2O. It catalyses the reaction D-ribulose 1,5-bisphosphate + O2 = 2-phosphoglycolate + (2R)-3-phosphoglycerate + 2 H(+). RuBisCO catalyzes two reactions: the carboxylation of D-ribulose 1,5-bisphosphate, the primary event in carbon dioxide fixation, as well as the oxidative fragmentation of the pentose substrate in the photorespiration process. Both reactions occur simultaneously and in competition at the same active site. This chain is Ribulose bisphosphate carboxylase large chain, found in Pinus balfouriana (Foxtail pine).